The following is a 184-amino-acid chain: Photosystem I assembly protein Ycf4 (184 aa).

Helical transmembrane passes span 21-43 (NFCW…ISSY) and 63-85 (GLVM…CAIS).

This sequence belongs to the Ycf4 family.

It is found in the plastid. It localises to the chloroplast thylakoid membrane. In terms of biological role, seems to be required for the assembly of the photosystem I complex. The chain is Photosystem I assembly protein Ycf4 from Spinacia oleracea (Spinach).